A 303-amino-acid chain; its full sequence is Protein translocase subunit SecF (303 aa).

The next 6 helical transmembrane spans lie at 28-48, 140-160, 164-184, 194-214, 246-266, and 272-292; these read SIILSLISFIWIGMYKFNFGI, IEAGTMAMLFSFAAIMIYIWV, WYFGLGILIALVHDVILALGF, LSTIAAVLTIIGYSVNDSVVI, ILTVVTTLLANLALVLFGGEA, and VLVFFGIIAGTYSSIFISAPI.

This sequence belongs to the SecD/SecF family. SecF subfamily. In terms of assembly, forms a complex with SecD. Part of the essential Sec protein translocation apparatus which comprises SecA, SecYEG and auxiliary proteins SecDF-YajC and YidC.

The protein localises to the cell inner membrane. Functionally, part of the Sec protein translocase complex. Interacts with the SecYEG preprotein conducting channel. SecDF uses the proton motive force (PMF) to complete protein translocation after the ATP-dependent function of SecA. In Rickettsia bellii (strain OSU 85-389), this protein is Protein translocase subunit SecF.